A 91-amino-acid polypeptide reads, in one-letter code: Probable Fe(2+)-trafficking protein (91 aa).

This sequence belongs to the Fe(2+)-trafficking protein family.

Its function is as follows. Could be a mediator in iron transactions between iron acquisition and iron-requiring processes, such as synthesis and/or repair of Fe-S clusters in biosynthetic enzymes. This Shewanella amazonensis (strain ATCC BAA-1098 / SB2B) protein is Probable Fe(2+)-trafficking protein.